We begin with the raw amino-acid sequence, 526 residues long: Reticulocyte-binding protein homolog 5 (526 aa).

A signal peptide spans 1–24; it reads MIRIKKKLILTIIYIHLFILNRLS. The tract at residues 33–51 is mediates interaction with human BSG; sequence KNQENNLTLLPIKSTEEEK. Asn-38 and Asn-214 each carry an N-linked (GlcNAc...) asparagine glycan. Cystine bridges form between Cys-224/Cys-317 and Cys-345/Cys-351. Residues 259-279 show a composition bias toward acidic residues; it reads EIDDKSEETDDETEEVEDSIQ. The segment at 259-294 is disordered; that stretch reads EIDDKSEETDDETEEVEDSIQDTDSNHTPSNKKKND. Asn-297 carries an N-linked (GlcNAc...) asparagine glycan.

As to quaternary structure, forms a complex composed of RH5, P113 and human BSG/basigin; the complex bridges the merozoite and host erythrocyte membranes. Within the complex, interacts (via C-terminus) with human BSG/basigin isoform 2 (via the extracellular domain); the interaction is independent of BSG glycosylation status. Weakly interacts with P.troglodytes BSG but not with G.gorilla BSG. Also, interacts (via N-terminus) with P113; the interaction tethers RH5 to the merozoite membrane. Component of the PfRH5 adhesion complex composed of 1 copy of CyRPA, RH5 and RIPR; the complex is formed during merozoite invasion of host erythrocytes specifically at the interface between the parasite and host membranes. Within the complex, interacts with CyRPA. CyRPA recruits RIPR to the RH5-P113-BSG complex; the formation of the PfRH5 adhesion complex increases the affinity of RH5 for BSG and probably leads to the release of RH5 from P113 while maintaining the interaction of the PfRH5 adhesion complex with BSG. Post-translationally, cleaved into a 45kDa form during merozoite invasion of host erythrocyte.

Its subcellular location is the secreted. It localises to the cytoplasmic vesicle. The protein localises to the secretory vesicle. The protein resides in the rhoptry lumen. It is found in the host cell membrane. Its function is as follows. Essential for the invasion of host erythrocytes by blood stage merozoites. By binding P113 at the surface of the merozoite and human BSG/basigin on the erythrocyte membrane, leads to the establishment of a tight junction between the merozoite and host erythrocyte membranes. In addition, the interaction with BSG results in BSG dimerization which triggers an increase in intracellular Ca(2+) in the erythrocyte. This essential step leads to a rearrangement of the erythrocyte cytoskeleton required for the merozoite invasion. This is Reticulocyte-binding protein homolog 5 from Plasmodium falciparum (isolate 3D7).